We begin with the raw amino-acid sequence, 257 residues long: 5-oxoprolinase subunit A (257 aa).

This sequence belongs to the LamB/PxpA family. Forms a complex composed of PxpA, PxpB and PxpC.

It catalyses the reaction 5-oxo-L-proline + ATP + 2 H2O = L-glutamate + ADP + phosphate + H(+). Its function is as follows. Catalyzes the cleavage of 5-oxoproline to form L-glutamate coupled to the hydrolysis of ATP to ADP and inorganic phosphate. This Natranaerobius thermophilus (strain ATCC BAA-1301 / DSM 18059 / JW/NM-WN-LF) protein is 5-oxoprolinase subunit A.